The following is a 418-amino-acid chain: Putative ion-transport protein YfeO (418 aa).

12 helical membrane-spanning segments follow: residues 10–30 (LLLSLPAVAIGIASSLILIVV), 54–74 (DSPLWIIGVLTLTGIAVGLVI), 99–119 (ALPGLIVALILGLAGGVSLGP), 120–140 (EHPIMTVNIALAVAIGARLLP), 149–169 (ILASAGTIGALFGTPVAAALI), 186–206 (LFAPLMAAAAGALTTGLFFHP), 223–243 (ILSGAIVAAIAIAAGMVAVWC), 258–278 (VLVLGIGGFILGILGVIGGPV), 300–320 (DYFLLAVIKLAALVVAAASGF), 322–342 (GGRIFPAVFVGVALGLMLHEH), 343–363 (VPAVPAAITVSCAILGIVLVV), and 371–391 (LFMAAVVVPNTTLLPLLCIVM).

It belongs to the chloride channel (TC 2.A.49) family.

It is found in the cell membrane. This Escherichia coli O139:H28 (strain E24377A / ETEC) protein is Putative ion-transport protein YfeO.